The following is a 490-amino-acid chain: AP-5 complex subunit mu-1 (490 aa).

Residues 206–476 form the MHD domain; it reads KPQVSISITE…LISSDYYIWN (271 aa).

This sequence belongs to the adaptor complexes medium subunit family. Probably part of the adaptor protein complex 5 (AP-5) a tetramer composed of AP5B1, AP5M1, AP5S1 and AP5Z1.

It is found in the cytoplasm. The protein resides in the cytosol. Its subcellular location is the late endosome membrane. It localises to the lysosome membrane. Functionally, as part of AP-5, a probable fifth adaptor protein complex it may be involved in endosomal transport. The protein is AP-5 complex subunit mu-1 (AP5M1) of Bos taurus (Bovine).